The primary structure comprises 1076 residues: Structural maintenance of chromosomes protein 5 (1076 aa).

Residue 49–56 participates in ATP binding; it reads GHNGSGKS. The stretch at 190 to 415 forms a coiled coil; the sequence is STSIEDKCTT…KRDEEQNSQL (226 aa). Positions 375–410 are enriched in basic and acidic residues; that stretch reads EQKYSTAERDSRQEEDAIQKKSYEMRQLENKKRDEE. Positions 375 to 420 are disordered; that stretch reads EQKYSTAERDSRQEEDAIQKKSYEMRQLENKKRDEEQNSQLNRQDR. Residues 416–617 form a flexible hinge region; the sequence is NRQDRYRVLQ…ANTWRDQFFK (202 aa). Coiled coils occupy residues 627-713 and 749-786; these read NSIL…EKKA and KSRVNKSNSEAETHRSKLEDLKSVKDAAEDLLKTALNH.

Belongs to the SMC family. SMC5 subfamily. As to quaternary structure, interacts with smc-6. In terms of tissue distribution, expressed in the germline (at protein level).

The protein resides in the nucleus. It localises to the chromosome. In terms of biological role, core component of the smc-5/smc-6 complex. Functions in DNA double strand break repair by promoting sister-chromatid homologous recombination during meiosis. Acts in a DNA repair pathway for removal of ionizing radiation- and ultraviolet (UV) radiation-induced DNA lesions that is distinct from classical nucleotide excision repair and the translesion synthesis pathway. Also involved in the recovery of stalled replication forks. The protein is Structural maintenance of chromosomes protein 5 of Caenorhabditis elegans.